Consider the following 272-residue polypeptide: 2-succinyl-6-hydroxy-2,4-cyclohexadiene-1-carboxylate synthase (272 aa).

This sequence belongs to the AB hydrolase superfamily. MenH family. In terms of assembly, monomer.

It catalyses the reaction 5-enolpyruvoyl-6-hydroxy-2-succinyl-cyclohex-3-ene-1-carboxylate = (1R,6R)-6-hydroxy-2-succinyl-cyclohexa-2,4-diene-1-carboxylate + pyruvate. It participates in quinol/quinone metabolism; 1,4-dihydroxy-2-naphthoate biosynthesis; 1,4-dihydroxy-2-naphthoate from chorismate: step 3/7. It functions in the pathway quinol/quinone metabolism; menaquinone biosynthesis. Its function is as follows. Catalyzes a proton abstraction reaction that results in 2,5-elimination of pyruvate from 2-succinyl-5-enolpyruvyl-6-hydroxy-3-cyclohexene-1-carboxylate (SEPHCHC) and the formation of 2-succinyl-6-hydroxy-2,4-cyclohexadiene-1-carboxylate (SHCHC). This chain is 2-succinyl-6-hydroxy-2,4-cyclohexadiene-1-carboxylate synthase, found in Yersinia pestis (strain Pestoides F).